A 508-amino-acid chain; its full sequence is Flavonoid 3',5'-hydroxylase 2 (508 aa).

C443 provides a ligand contact to heme.

Belongs to the cytochrome P450 family. It depends on heme as a cofactor. In terms of tissue distribution, flowers.

The protein resides in the microsome. It is found in the endoplasmic reticulum. The enzyme catalyses a 3',5'-unsubstituted flavanone + 2 reduced [NADPH--hemoprotein reductase] + 2 O2 = a 3',5'-dihydroxyflavanone + 2 oxidized [NADPH--hemoprotein reductase] + 2 H2O + 2 H(+). The protein operates within pigment biosynthesis; anthocyanin biosynthesis. Its function is as follows. Catalyzes the 3'5'-hydroxylation of naringenin and eriodictyol to form 5,7,3,'4',5'-pentahydroxyflavanone and 3',5'-hydroxylation of dihydrokaempferol and dihydroquercetin to form dihydromyricetin. The sequence is that of Flavonoid 3',5'-hydroxylase 2 (CYP75A3) from Petunia hybrida (Petunia).